Here is a 475-residue protein sequence, read N- to C-terminus: Ribulose bisphosphate carboxylase large chain (475 aa).

The propeptide occupies 1–2; sequence MS. Pro3 bears the N-acetylproline mark. N6,N6,N6-trimethyllysine is present on Lys14. 2 residues coordinate substrate: Asn123 and Thr173. Lys175 functions as the Proton acceptor in the catalytic mechanism. A substrate-binding site is contributed by Lys177. 3 residues coordinate Mg(2+): Lys201, Asp203, and Glu204. Lys201 carries the N6-carboxylysine modification. His294 serves as the catalytic Proton acceptor. Residues Arg295, His327, and Ser379 each coordinate substrate.

Belongs to the RuBisCO large chain family. Type I subfamily. Heterohexadecamer of 8 large chains and 8 small chains. Mg(2+) is required as a cofactor.

The protein resides in the plastid. It localises to the chloroplast. The enzyme catalyses 2 (2R)-3-phosphoglycerate + 2 H(+) = D-ribulose 1,5-bisphosphate + CO2 + H2O. The catalysed reaction is D-ribulose 1,5-bisphosphate + O2 = 2-phosphoglycolate + (2R)-3-phosphoglycerate + 2 H(+). Its function is as follows. RuBisCO catalyzes two reactions: the carboxylation of D-ribulose 1,5-bisphosphate, the primary event in carbon dioxide fixation, as well as the oxidative fragmentation of the pentose substrate in the photorespiration process. Both reactions occur simultaneously and in competition at the same active site. The protein is Ribulose bisphosphate carboxylase large chain of Huperzia lucidula (Shining clubmoss).